Reading from the N-terminus, the 607-residue chain is Dopamine receptor 3 (607 aa).

At 1-23 (MLAGQHHVTDIESPLMVVLWRVA) the chain is on the extracellular side. The chain crosses the membrane as a helical span at residues 24 to 44 (AGVFLPLVPTMAVFGNVLVIM). The Cytoplasmic segment spans residues 45–58 (SVFRERSLQTVTNM). The chain crosses the membrane as a helical span at residues 59 to 79 (LIVSLAVSDFMVAIGVMSFGV). At 80–96 (YYEWNDFKWGLGSFFCH) the chain is on the extracellular side. A disulfide bond links Cys-95 and Cys-173. The helical transmembrane segment at 97-117 (VYQALDVACSTASILNLLAIS) threads the bilayer. Over 118 to 141 (LDRYIAIGHPISYAQYGARGGRAM) the chain is Cytoplasmic. A helical membrane pass occupies residues 142 to 162 (ISITIVWGVSVAVALPLLLGV). Topologically, residues 163–182 (NPMEENDLQECELANPYFNM) are extracellular. The chain crosses the membrane as a helical span at residues 183–203 (ISSIFSFFIPCIAMIILYTII). Residues 204 to 523 (FRRLRQRERA…TKQMRREHKA (320 aa)) lie on the Cytoplasmic side of the membrane. Positions 402 to 435 (VPSIQDEKKLSQKSNDLPFSHQNGTHKQKLLPNP) are disordered. The segment covering 413–424 (QKSNDLPFSHQN) has biased composition (polar residues). Residues 524-544 (TVTLAVVLAVFLFCWLPFFVL) form a helical membrane-spanning segment. Topologically, residues 545–558 (HLSNSICLIIDENS) are extracellular. Residues 559–579 (ACVGFLPLYLATWLGYLNSSL) traverse the membrane as a helical segment. Residues 580 to 607 (NPLIYTVFDQRFRNAFRNILSCGIFKKR) lie on the Cytoplasmic side of the membrane.

Belongs to the G-protein coupled receptor 1 family. As to expression, expressed in the neurons of the head, ventral cord and tail with weak expression observed in body wall muscles and PVD neurons. In the ventral cord, expressed strongly in GABAergic neurons with weaker expression in cholinergic motor neurons. Expressed in cholinergic SIA neurons and octopaminergic RIC neurons. In males, expressed in the dorsal and ventral spicule protractor and retractor muscles, and the sensory post-cloacal sensilla B (PCB) neuron. Expressed in the head acetylcholine neurons. Expressed in the AVA, AVB, AVD and AVE command interneurons. Expressed in premotor interneurons.

Its subcellular location is the cell membrane. G-protein coupled receptor which binds to the neurotransmitter dopamine with high affinity leading to the activation of an associated G-protein and downstream signaling pathways. Couples to G-proteins to inhibit adenylate cyclase (AC) activity and cAMP production. Antagonizes the D1-like dopamine receptor dop-1 to negatively regulate the rate of locomotion. Negatively regulates locomotion through the activation of goa-1 subunit proteins which inactivates the unc-77/nca-1 and nca-2 ion-channels in the command interneurons. Inhibits early-stage swimming by modulating the unc-77/nca-1 and nca-2 ion channels of premotor interneurons. In GABAergic, RIC, and SIA neurons, antagonizes the function of dop-1 to play a role in behavioral plasticity and regulate the decision-making process when conflicting alternatives are present. Antagonizes octopamine signaling in response to food by promoting the dopamine-mediated suppression of crh-1/CREB1 transcription factor activation in cholinergic SIA neurons. This is most likely in association with the G(o)-alpha G-protein subunit goa-1. Promotes male mating behavior by antagonizing acetylcholine signaling to control the protrusion of copulatory spicules from the tail of males during hermaphrodite vulval location. Under mitochondria stress, plays a role in bacterial preference, resulting in learned avoidance behavior. The sequence is that of Dopamine receptor 3 from Caenorhabditis elegans.